Consider the following 354-residue polypeptide: 3-isopropylmalate dehydrogenase (354 aa).

76–87 (GPRWDGAKERPE) provides a ligand contact to NAD(+). Substrate contacts are provided by R94, R104, R130, and D215. Positions 215, 239, and 243 each coordinate Mg(2+). Position 273 to 285 (273 to 285 (GSAPDIAGKNKAN)) interacts with NAD(+).

This sequence belongs to the isocitrate and isopropylmalate dehydrogenases family. LeuB type 1 subfamily. Homodimer. The cofactor is Mg(2+). Mn(2+) serves as cofactor.

It is found in the cytoplasm. The catalysed reaction is (2R,3S)-3-isopropylmalate + NAD(+) = 4-methyl-2-oxopentanoate + CO2 + NADH. Its pathway is amino-acid biosynthesis; L-leucine biosynthesis; L-leucine from 3-methyl-2-oxobutanoate: step 3/4. In terms of biological role, catalyzes the oxidation of 3-carboxy-2-hydroxy-4-methylpentanoate (3-isopropylmalate) to 3-carboxy-4-methyl-2-oxopentanoate. The product decarboxylates to 4-methyl-2 oxopentanoate. The sequence is that of 3-isopropylmalate dehydrogenase from Bacillus thuringiensis subsp. konkukian (strain 97-27).